A 483-amino-acid chain; its full sequence is ATP synthase subunit beta, chloroplastic (483 aa).

163–170 (GGAGVGKT) contributes to the ATP binding site.

Belongs to the ATPase alpha/beta chains family. In terms of assembly, F-type ATPases have 2 components, CF(1) - the catalytic core - and CF(0) - the membrane proton channel. CF(1) has five subunits: alpha(3), beta(3), gamma(1), delta(1), epsilon(1). CF(0) has four main subunits: a(1), b(1), b'(1) and c(9-12).

It is found in the plastid. The protein resides in the chloroplast thylakoid membrane. It carries out the reaction ATP + H2O + 4 H(+)(in) = ADP + phosphate + 5 H(+)(out). Produces ATP from ADP in the presence of a proton gradient across the membrane. The catalytic sites are hosted primarily by the beta subunits. The polypeptide is ATP synthase subunit beta, chloroplastic (Ostreococcus tauri).